Reading from the N-terminus, the 118-residue chain is Large ribosomal subunit protein bL20 (118 aa).

Belongs to the bacterial ribosomal protein bL20 family.

Its function is as follows. Binds directly to 23S ribosomal RNA and is necessary for the in vitro assembly process of the 50S ribosomal subunit. It is not involved in the protein synthesizing functions of that subunit. This is Large ribosomal subunit protein bL20 from Pectobacterium atrosepticum (strain SCRI 1043 / ATCC BAA-672) (Erwinia carotovora subsp. atroseptica).